We begin with the raw amino-acid sequence, 450 residues long: 23S rRNA (uracil(1939)-C(5))-methyltransferase RlmD (450 aa).

Residues 1-22 (MARNKGGLRFQPSGGARGPAIP) are disordered. The TRAM domain maps to 20–78 (AIPVGKKQRLTIERLAHDGRGIAHEAGMTWFVSGGLPGEELEARVLGARSKVVDARSER). Residues C91, C97, C100, and C179 each contribute to the [4Fe-4S] cluster site. Residues Q283, F312, N317, E333, D360, and D381 each contribute to the S-adenosyl-L-methionine site. C407 acts as the Nucleophile in catalysis.

The protein belongs to the class I-like SAM-binding methyltransferase superfamily. RNA M5U methyltransferase family. RlmD subfamily.

It catalyses the reaction uridine(1939) in 23S rRNA + S-adenosyl-L-methionine = 5-methyluridine(1939) in 23S rRNA + S-adenosyl-L-homocysteine + H(+). Catalyzes the formation of 5-methyl-uridine at position 1939 (m5U1939) in 23S rRNA. This Pseudomonas aeruginosa (strain UCBPP-PA14) protein is 23S rRNA (uracil(1939)-C(5))-methyltransferase RlmD.